The primary structure comprises 448 residues: tRNA modification GTPase MnmE (448 aa).

Positions 21, 80, and 119 each coordinate (6S)-5-formyl-5,6,7,8-tetrahydrofolate. Residues 215–370 (GVKLAIVGRP…LSEEILKKVG (156 aa)) enclose the TrmE-type G domain. Residue N225 coordinates K(+). Residues 225–230 (NVGKSS), 244–250 (TDIAGTT), and 269–272 (DTAG) each bind GTP. Mg(2+) is bound at residue S229. K(+) contacts are provided by T244, I246, and T249. Residue T250 participates in Mg(2+) binding. K448 contributes to the (6S)-5-formyl-5,6,7,8-tetrahydrofolate binding site.

Belongs to the TRAFAC class TrmE-Era-EngA-EngB-Septin-like GTPase superfamily. TrmE GTPase family. As to quaternary structure, homodimer. Heterotetramer of two MnmE and two MnmG subunits. K(+) serves as cofactor.

It is found in the cytoplasm. In terms of biological role, exhibits a very high intrinsic GTPase hydrolysis rate. Involved in the addition of a carboxymethylaminomethyl (cmnm) group at the wobble position (U34) of certain tRNAs, forming tRNA-cmnm(5)s(2)U34. In Aquifex aeolicus (strain VF5), this protein is tRNA modification GTPase MnmE.